The chain runs to 313 residues: Zinc transporter ZitB (313 aa).

Residues 1–20 (MAHSHSHTSSHLPEDNNARR) are Cytoplasmic-facing. Residues 21–41 (LLYAFGVTAGFMLVEVVGGFL) traverse the membrane as a helical segment. Residues 42 to 47 (SGSLAL) lie on the Periplasmic side of the membrane. Residues 48–68 (LADAGHMLTDTAALLFALLAV) form a helical membrane-spanning segment. The Cytoplasmic portion of the chain corresponds to 69–89 (QFSRRPPTIRHTFGWLRLTTL). A helical transmembrane segment spans residues 90-110 (AAFVNAIALVVITILIVWEAI). Residues 111 to 121 (ERFRTPRPVEG) lie on the Periplasmic side of the membrane. A helical transmembrane segment spans residues 122–142 (GMMMAIAVAGLLANILSFWLL). At 143 to 159 (HHGSEEKNLNVRAAALH) the chain is on the cytoplasmic side. The chain crosses the membrane as a helical span at residues 160-180 (VLGDLLGSVGAIIAALIIIWT). A topological domain (periplasmic) is located at residue glycine 181. A helical membrane pass occupies residues 182–202 (WTPADPILSILVSLLVLRSAW). Residues 203–313 (RLLKDSVNEL…GVSGHSHHHH (111 aa)) lie on the Cytoplasmic side of the membrane.

Belongs to the cation diffusion facilitator (CDF) transporter (TC 2.A.4) family. SLC30A subfamily.

The protein resides in the cell inner membrane. In terms of biological role, involved in zinc efflux across the cytoplasmic membrane, thus reducing zinc accumulation in the cytoplasm and rendering bacteria more resistant to zinc. It may contribute to zinc homeostasis at low concentrations of zinc. The protein is Zinc transporter ZitB (zitB) of Shigella flexneri.